The following is a 668-amino-acid chain: DNA ligase (668 aa).

NAD(+) is bound by residues 32 to 36, 81 to 82, and Glu-113; these read DAEYD and SL. Catalysis depends on Lys-115, which acts as the N6-AMP-lysine intermediate. Positions 136, 173, 289, and 313 each coordinate NAD(+). 4 residues coordinate Zn(2+): Cys-407, Cys-410, Cys-425, and Cys-431. The 79-residue stretch at 590-668 folds into the BRCT domain; that stretch reads ASEQPFAGKT…EEELQQALQG (79 aa).

This sequence belongs to the NAD-dependent DNA ligase family. LigA subfamily. Requires Mg(2+) as cofactor. Mn(2+) serves as cofactor.

It carries out the reaction NAD(+) + (deoxyribonucleotide)n-3'-hydroxyl + 5'-phospho-(deoxyribonucleotide)m = (deoxyribonucleotide)n+m + AMP + beta-nicotinamide D-nucleotide.. Its function is as follows. DNA ligase that catalyzes the formation of phosphodiester linkages between 5'-phosphoryl and 3'-hydroxyl groups in double-stranded DNA using NAD as a coenzyme and as the energy source for the reaction. It is essential for DNA replication and repair of damaged DNA. The sequence is that of DNA ligase from Aeromonas hydrophila subsp. hydrophila (strain ATCC 7966 / DSM 30187 / BCRC 13018 / CCUG 14551 / JCM 1027 / KCTC 2358 / NCIMB 9240 / NCTC 8049).